Here is a 137-residue protein sequence, read N- to C-terminus: Large ribosomal subunit protein uL16 (137 aa).

Belongs to the universal ribosomal protein uL16 family. Part of the 50S ribosomal subunit.

Functionally, binds 23S rRNA and is also seen to make contacts with the A and possibly P site tRNAs. The polypeptide is Large ribosomal subunit protein uL16 (Azorhizobium caulinodans (strain ATCC 43989 / DSM 5975 / JCM 20966 / LMG 6465 / NBRC 14845 / NCIMB 13405 / ORS 571)).